The sequence spans 79 residues: Acyl carrier protein (79 aa).

One can recognise a Carrier domain in the interval 2–77; it reads SDIEARVKKI…NAIDYANTHQ (76 aa). The residue at position 37 (Ser37) is an O-(pantetheine 4'-phosphoryl)serine.

It belongs to the acyl carrier protein (ACP) family. 4'-phosphopantetheine is transferred from CoA to a specific serine of apo-ACP by AcpS. This modification is essential for activity because fatty acids are bound in thioester linkage to the sulfhydryl of the prosthetic group.

Its subcellular location is the cytoplasm. It participates in lipid metabolism; fatty acid biosynthesis. In terms of biological role, carrier of the growing fatty acid chain in fatty acid biosynthesis. In Paracidovorax citrulli (strain AAC00-1) (Acidovorax citrulli), this protein is Acyl carrier protein.